A 663-amino-acid polypeptide reads, in one-letter code: Leishmanolysin-like peptidase (663 aa).

His-246 lines the Zn(2+) pocket. Residue Glu-247 is part of the active site. The Zn(2+) site is built by His-250 and His-353.

Belongs to the peptidase M8 family. Zn(2+) is required as a cofactor.

Its subcellular location is the cytoplasm. In terms of biological role, metalloprotease. This chain is Leishmanolysin-like peptidase, found in Caenorhabditis briggsae.